Consider the following 440-residue polypeptide: Thymidine phosphorylase (440 aa).

It belongs to the thymidine/pyrimidine-nucleoside phosphorylase family. In terms of assembly, homodimer.

It catalyses the reaction thymidine + phosphate = 2-deoxy-alpha-D-ribose 1-phosphate + thymine. It participates in pyrimidine metabolism; dTMP biosynthesis via salvage pathway; dTMP from thymine: step 1/2. Its function is as follows. The enzymes which catalyze the reversible phosphorolysis of pyrimidine nucleosides are involved in the degradation of these compounds and in their utilization as carbon and energy sources, or in the rescue of pyrimidine bases for nucleotide synthesis. The protein is Thymidine phosphorylase of Escherichia coli (strain K12 / DH10B).